The primary structure comprises 276 residues: 4-deoxy-L-threo-5-hexosulose-uronate ketol-isomerase (276 aa).

Zn(2+) contacts are provided by His-194, His-196, Glu-201, and His-243.

It belongs to the KduI family. The cofactor is Zn(2+).

The catalysed reaction is 5-dehydro-4-deoxy-D-glucuronate = 3-deoxy-D-glycero-2,5-hexodiulosonate. Its pathway is glycan metabolism; pectin degradation; 2-dehydro-3-deoxy-D-gluconate from pectin: step 4/5. In terms of biological role, catalyzes the isomerization of 5-dehydro-4-deoxy-D-glucuronate to 3-deoxy-D-glycero-2,5-hexodiulosonate. The protein is 4-deoxy-L-threo-5-hexosulose-uronate ketol-isomerase of Halalkalibacterium halodurans (strain ATCC BAA-125 / DSM 18197 / FERM 7344 / JCM 9153 / C-125) (Bacillus halodurans).